The chain runs to 422 residues: Biofilm regulator 1 (422 aa).

2 stretches are compositionally biased toward low complexity: residues 1-19 (MSSS…TTSA) and 36-45 (SGGSNNGNGS). Disordered stretches follow at residues 1–86 (MSSS…KCPP) and 116–207 (RLSS…PSHP). The segment covering 46–61 (ALKSQISPRLSDTSRI) has biased composition (polar residues). 2 stretches are compositionally biased toward low complexity: residues 69-81 (TSGS…SSTP) and 120-143 (PTLP…LSPV). The segment covering 146–159 (VINTPPQQPQSVSA) has biased composition (polar residues). Residues 160-194 (STSPNTQYQYYQYQQQSSPIQQQQQQQQATPAATP) show a composition bias toward low complexity. The span at 195–205 (TVMQMAQNQPS) shows a compositional bias: polar residues. The GATA-type zinc finger occupies 282 to 307 (CHRCGTTETPEWRRGPKGVRTLCNAC).

In terms of assembly, interacts with HDA1.

It is found in the nucleus. Its function is as follows. Transcription factor required for hyphal growth, biofilm formation, and virulence. Promotes formation of both conventional and pheromone-stimulated biofilms. Binds and recruits HDA1 to promoters of hypha-specific genes in a rapamycin-dependent manner. Involved in the switch between two heritable states, the white and opaque states. These two cell types differ in many characteristics, including cell structure, mating competence, and virulence. Each state is heritable for many generations, and switching between states occurs stochastically at low frequency. This chain is Biofilm regulator 1 (BRG1), found in Candida albicans (strain SC5314 / ATCC MYA-2876) (Yeast).